A 260-amino-acid chain; its full sequence is Small ribosomal subunit protein eS1 (260 aa).

Ala-2 carries the N-acetylalanine; partial modification.

Belongs to the eukaryotic ribosomal protein eS1 family. Component of the small ribosomal subunit. Mature ribosomes consist of a small (40S) and a large (60S) subunit. The 40S subunit contains about 33 different proteins and 1 molecule of RNA (18S). The 60S subunit contains about 49 different proteins and 3 molecules of RNA (25S, 5.8S and 5S).

It localises to the cytoplasm. The polypeptide is Small ribosomal subunit protein eS1 (Mycosarcoma maydis (Corn smut fungus)).